Consider the following 542-residue polypeptide: DM7 family protein GG17591 (542 aa).

The span at Gly415–Ser430 shows a compositional bias: basic and acidic residues. The interval Gly415–Gln443 is disordered.

It belongs to the DM7 family.

The sequence is that of DM7 family protein GG17591 from Drosophila erecta (Fruit fly).